The sequence spans 742 residues: Protein-associating with the carboxyl-terminal domain of ezrin (742 aa).

Gly2 carries N-myristoyl glycine lipidation. Residues 2-245 (GSENSALKSY…LCTLLSHDFF (244 aa)) enclose the Protein kinase domain. 4 HEAT repeats span residues 199 to 238 (ESLL…ALCT), 285 to 323 (LIAS…HAQG), 333 to 370 (LFQS…HFTQ), and 372 to 409 (QLKK…LLGP). Ser439 carries the post-translational modification Phosphoserine. 3 disordered regions span residues 506–544 (LSDV…QTVN), 568–598 (SSWD…TSGE), and 629–652 (GDDA…VPSE). A compositionally biased stretch (acidic residues) spans 529–539 (WPDWSEPEEPE). Residues 548–742 (WPREPCDDVK…GELNWEDNNW (195 aa)) are interaction with EZR. A Phosphoserine modification is found at Ser707. Residues 723–742 (EGEAEGWEEEGELNWEDNNW) form a disordered region.

Belongs to the protein kinase superfamily. Interacts with EZR/VIL2 C-terminal domain. In terms of processing, may be myristoylated; myristoylation may target it to Golgi compartment. Post-translationally, phosphorylated. Ubiquitously expressed.

Its subcellular location is the cytoplasm. The protein resides in the golgi apparatus. The protein localises to the cell projection. It localises to the lamellipodium. Functionally, may play a role in regulating cell adhesion/migration complexes in migrating cells. The chain is Protein-associating with the carboxyl-terminal domain of ezrin (SCYL3) from Homo sapiens (Human).